The sequence spans 233 residues: Aquaglyceroporin AqpS (233 aa).

A run of 2 helical transmembrane segments spans residues 11–31 (VAEA…GIMA) and 40–60 (LALV…VTIL). Positions 69–71 (NPA) match the NPA 1 motif. 3 consecutive transmembrane segments (helical) span residues 89-109 (AYVI…HLMF), 125-145 (AQWL…LAGI), and 152-172 (VPWL…STSF). The NPA 2 signature appears at 174–176 (NPA). The helical transmembrane segment at 193–213 (GDLPGFVIAELLGAVCALALM) threads the bilayer.

Belongs to the MIP/aquaporin (TC 1.A.8) family. NIP (TC 1.A.8.12) subfamily.

The protein localises to the cell inner membrane. Involved in resistance to arsenic. Facilitates efflux of arsenite [As(III)]. Arsenate [As(V)] enters the cell through phosphate transport systems and is reduced to arsenite by the arsenate reductase ArsC. Internally generated arsenite flows out of the cell by downhill movement through AqpS. Can also transport the highly toxic methylarsenite [MAs(III)] and the relatively non-toxic methylarsenate [MAs(V)]. May be a component of an methylarsenite resistance pathway in which methylarsenite enters cells via AqpS, is oxidized by ArsH to methylarsenate, which exits the cells via AqpS. This pathway may confer a selective advantage for R.melliloti to grow in the presence of environmental methylarsenicals. This is Aquaglyceroporin AqpS from Rhizobium meliloti (strain 1021) (Ensifer meliloti).